The sequence spans 312 residues: uncharacterized protein (312 aa).

The next 10 helical transmembrane spans lie at 11-31, 46-66, 72-92, 98-118, 128-148, 155-171, 183-203, 221-241, 254-274, and 277-297; these read IAAI…KIAL, IAFA…SIRV, ILPL…FGLV, EAGI…AYVL, GFTV…GVDV, GSLL…MYNT, TELT…IALV, PGFV…TSFL, MSAF…VILN, and LAWY…GSNI. EamA domains lie at 18–142 and 164–297; these read FIIG…FIFV and LSSA…GSNI.

This sequence belongs to the EamA transporter family.

The protein resides in the cell membrane. This is an uncharacterized protein from Bacillus subtilis (strain 168).